A 60-amino-acid chain; its full sequence is Cytotoxin 7 (60 aa).

Intrachain disulfides connect Cys3–Cys21, Cys14–Cys38, Cys42–Cys53, and Cys54–Cys59.

Belongs to the three-finger toxin family. Short-chain subfamily. Type IA cytotoxin sub-subfamily. Monomer in solution; Homodimer and oligomer in the presence of negatively charged lipids forming a pore with a size ranging between 20 and 30 Angstroms. Expressed by the venom gland.

The protein resides in the secreted. It localises to the target cell membrane. Its function is as follows. Shows cytolytic activity on many different cells by forming pore in lipid membranes. In vivo, increases heart rate or kills the animal by cardiac arrest. In addition, it binds to heparin with high affinity, interacts with Kv channel-interacting protein 1 (KCNIP1) in a calcium-independent manner, and binds to integrin alpha-V/beta-3 (ITGAV/ITGB3) with moderate affinity. Preferentially binds acidic phospholipids like phosphatidylserine, phosphatidic acid and phosphatidyl glycerol. Has hemolytic activity towards human erythrocytes (EC(50)=0.171 uM) and cytolytic activity towards various cell lines. In Naja naja (Indian cobra), this protein is Cytotoxin 7.